The primary structure comprises 227 residues: Lipoprotein-releasing system ATP-binding protein LolD (227 aa).

The ABC transporter domain maps to Leu6 to Val227. Residue Ala43–Ser50 participates in ATP binding.

Belongs to the ABC transporter superfamily. Lipoprotein translocase (TC 3.A.1.125) family. As to quaternary structure, the complex is composed of two ATP-binding proteins (LolD) and two transmembrane proteins (LolC and LolE).

The protein resides in the cell inner membrane. In terms of biological role, part of the ABC transporter complex LolCDE involved in the translocation of mature outer membrane-directed lipoproteins, from the inner membrane to the periplasmic chaperone, LolA. Responsible for the formation of the LolA-lipoprotein complex in an ATP-dependent manner. This Roseobacter denitrificans (strain ATCC 33942 / OCh 114) (Erythrobacter sp. (strain OCh 114)) protein is Lipoprotein-releasing system ATP-binding protein LolD.